We begin with the raw amino-acid sequence, 332 residues long: Ornithine carbamoyltransferase, catabolic (332 aa).

Carbamoyl phosphate-binding positions include 60–63 (STRT), Gln87, Arg111, and 138–141 (HPTQ). Residues Asn170, Asp230, and 234 to 235 (SM) contribute to the L-ornithine site. Carbamoyl phosphate contacts are provided by residues 271-272 (CL) and Arg316.

The protein belongs to the aspartate/ornithine carbamoyltransferase superfamily. OTCase family.

Its subcellular location is the cytoplasm. It carries out the reaction carbamoyl phosphate + L-ornithine = L-citrulline + phosphate + H(+). It participates in amino-acid degradation; L-arginine degradation via ADI pathway; carbamoyl phosphate from L-arginine: step 2/2. In terms of biological role, reversibly catalyzes the transfer of the carbamoyl group from carbamoyl phosphate (CP) to the N(epsilon) atom of ornithine (ORN) to produce L-citrulline. The sequence is that of Ornithine carbamoyltransferase, catabolic from Bacillus cereus (strain ATCC 10987 / NRS 248).